The primary structure comprises 354 residues: Protein Wnt-8a (354 aa).

The first 19 residues, methionine 1–glycine 19, serve as a signal peptide directing secretion. A disulfide bond links cysteine 54 and cysteine 65. N-linked (GlcNAc...) asparagine glycosylation occurs at asparagine 103. Cystine bridges form between cysteine 104-cysteine 112, cysteine 114-cysteine 132, cysteine 180-cysteine 194, cysteine 182-cysteine 189, cysteine 259-cysteine 297, cysteine 275-cysteine 290, cysteine 294-cysteine 336, cysteine 312-cysteine 327, cysteine 314-cysteine 324, and cysteine 319-cysteine 320. Serine 186 is lipidated: O-palmitoleoyl serine. A glycan (N-linked (GlcNAc...) asparagine) is linked at asparagine 262.

It belongs to the Wnt family. In terms of assembly, forms a soluble 1:1 complex with AFM; this prevents oligomerization and is required for prolonged biological activity. The complex with AFM may represent the physiological form in body fluids. Palmitoleoylation is required for efficient binding to frizzled receptors. Depalmitoleoylation leads to Wnt signaling pathway inhibition. Post-translationally, proteolytic processing by TIKI1 and TIKI2 promotes oxidation and formation of large disulfide-bond oligomers, leading to inactivation of WNT8A.

The protein resides in the secreted. It is found in the extracellular space. It localises to the extracellular matrix. Ligand for members of the frizzled family of seven transmembrane receptors. Plays a role in embryonic patterning. The polypeptide is Protein Wnt-8a (Wnt8a) (Mus musculus (Mouse)).